We begin with the raw amino-acid sequence, 279 residues long: Universal stress protein MT2087 (279 aa).

It belongs to the universal stress protein A family.

The chain is Universal stress protein MT2087 from Mycobacterium tuberculosis (strain CDC 1551 / Oshkosh).